The sequence spans 201 residues: Glycerol-3-phosphate acyltransferase (201 aa).

6 helical membrane-spanning segments follow: residues 10 to 30 (MLIG…GLIL), 60 to 80 (LAAA…LIAA), 86 to 106 (AAIA…WIGF), 116 to 136 (LGVL…AWIV), 139 to 159 (LLTR…PIAL), and 166 to 186 (ALAA…RANI).

It belongs to the PlsY family. In terms of assembly, probably interacts with PlsX.

The protein localises to the cell inner membrane. The catalysed reaction is an acyl phosphate + sn-glycerol 3-phosphate = a 1-acyl-sn-glycero-3-phosphate + phosphate. It functions in the pathway lipid metabolism; phospholipid metabolism. Its function is as follows. Catalyzes the transfer of an acyl group from acyl-phosphate (acyl-PO(4)) to glycerol-3-phosphate (G3P) to form lysophosphatidic acid (LPA). This enzyme utilizes acyl-phosphate as fatty acyl donor, but not acyl-CoA or acyl-ACP. This Brucella suis (strain ATCC 23445 / NCTC 10510) protein is Glycerol-3-phosphate acyltransferase.